Here is a 718-residue protein sequence, read N- to C-terminus: Quinolinate synthase, chloroplastic (718 aa).

Low complexity predominate over residues 1-22 (MALALSVAPTSSSLSSLLSRTP). Residues 1-29 (MALALSVAPTSSSLSSLLSRTPNPSPNFR) form a disordered region. A chloroplast-targeting transit peptide spans 1 to 70 (MALALSVAPT…VNASPFSISA (70 aa)). Cys132 serves as the catalytic Cysteine persulfide intermediate. 2 residues coordinate iminosuccinate: His280 and Ser306. Cys360 lines the [4Fe-4S] cluster pocket. Iminosuccinate-binding positions include 389 to 391 (YIN) and Ser411. Cys484 lines the [4Fe-4S] cluster pocket. Residues 510-512 (HLE) and Thr535 contribute to the iminosuccinate site. Cys640 provides a ligand contact to [4Fe-4S] cluster.

The protein belongs to the quinolinate synthase family. Type 1 subfamily. Homodimer. Interacts in vitro with NFS2, CpNIFS3 and AO. Part of a Cys defulfurase complex. It depends on [4Fe-4S] cluster as a cofactor. Expressed in roots, leaves, stems and flowers.

It localises to the plastid. It is found in the chloroplast. It catalyses the reaction iminosuccinate + dihydroxyacetone phosphate = quinolinate + phosphate + 2 H2O + H(+). Its pathway is cofactor biosynthesis; NAD(+) biosynthesis; quinolinate from iminoaspartate: step 1/1. Its function is as follows. Catalyzes the condensation of iminoaspartate with dihydroxyacetone phosphate to form quinolinate. Can complement nadA-deficient E.coli mutant. Essential for the de novo synthesis of NAD. Also participates in cysteine desulfurization mediated by NFS2. Can activate the cysteine desulfurase activity of NFS2 in vitro. In Arabidopsis thaliana (Mouse-ear cress), this protein is Quinolinate synthase, chloroplastic.